Here is a 375-residue protein sequence, read N- to C-terminus: Terpene cyclase braA (375 aa).

Positions 116, 264, and 268 each coordinate Mg(2+). The short motif at 116–120 (DDEID) is the D(D/E)XX(D/E) motif element. Positions 264–272 (NDVLSLQKE) match the NSE motif motif. The short motif at 348 to 355 (WSYSCERY) is the WxxxxxRY motif element. Positions 354 and 355 each coordinate (2E,6E)-farnesyl diphosphate.

This sequence belongs to the terpene synthase family. Homodimer. Mg(2+) serves as cofactor.

It carries out the reaction (2E,6E)-farnesyl diphosphate + H2O = trichobrasilenol + diphosphate. The protein operates within secondary metabolite biosynthesis. Its function is as follows. Terpene cyclase; part of the gene cluster that mediates the biosynthesis of the brasilane terpene glycosides brasilane D and E. The biosynthesis starts with the activity of the terpene cyclase braA that converts farnesyl pyrophosphate into the sesquiterpene alcohol trichobrasilenol. Subsequently, trichobrasilenol is glycosylated by the O-glycosyltransferase braB putatively using UDP-GlcNAc as sugar donor to yield brasilane A. The latter then undergoes two rounds of oxidation performed by the cytochrome P450 monooxygenase braC. In the first round braC hydroxylates C-12 forming brasilane D, which serves as substrate in the second round to establish the epoxide at the bond between C-5 and C-10 and oxidize the alcohol at C-12 to an aldehyde leading to the final product brasilane E. This chain is Terpene cyclase braA, found in Annulohypoxylon truncatum (Hypoxylon truncatum).